Consider the following 397-residue polypeptide: MLRKKTLRDVDVKGKRVLVRVDYNVPLDEQGNIVDDTRIRASLPTVEYLLDANAKVILMSHLGRPKNRDPKYSLAPVAKRLSRYINKEVKLAPDCVGEEVKRIVNSMKEGDVVLLENLRFHKEETECDENFARELASLGEVYVADAFGTCHRKHASVYLVPKFLKPAVMGFLLEKEITYFEKAMVAPQRPVVAILGGAKVSSKLEVIKNLIRRVDKLFIGGAMAFTFLKAMGYKVGNSLVEDDLQDVARDLIDVAKKLEIKLYLPVDFVIGQEVSENTPTKVVPWQEIPDGWMGLDIGPVSVELVKEIISDAQTIVWNGPMGVFEIDKFKHGTIEVAKLLAQSSALTIAGGGDTDHAIHKAGVYHAFDFVSTGGGAFLELLAGKELPCLVNLDDKEA.

Substrate-binding positions include 22-24 (DYN), Arg38, 61-64 (HLGR), Arg119, and Arg152. Residues Lys203, Gly294, Glu325, and 351-354 (GGDT) each bind ATP.

This sequence belongs to the phosphoglycerate kinase family. Monomer.

Its subcellular location is the cytoplasm. The catalysed reaction is (2R)-3-phosphoglycerate + ATP = (2R)-3-phospho-glyceroyl phosphate + ADP. It functions in the pathway carbohydrate degradation; glycolysis; pyruvate from D-glyceraldehyde 3-phosphate: step 2/5. This chain is Phosphoglycerate kinase (pgk), found in Aquifex aeolicus (strain VF5).